The sequence spans 140 residues: uncharacterized protein (140 aa).

A VOC domain is found at 3–131 (RLDHIGIAVF…NGVLVELCEP (129 aa)). Residues His-6, Glu-53, His-77, and Glu-127 each coordinate a divalent metal cation.

This sequence belongs to the methylmalonyl-CoA epimerase family.

This is an uncharacterized protein from Bacillus subtilis (strain 168).